We begin with the raw amino-acid sequence, 188 residues long: mRNA transport factor GFD1 (188 aa).

The interval methionine 1–serine 128 is disordered. Basic residues predominate over residues lysine 18–asparagine 28. Over residues asparagine 29 to asparagine 44 the composition is skewed to low complexity. Basic and acidic residues predominate over residues glycine 59–proline 79. A phosphoserine mark is found at serine 87, serine 106, and serine 111. A compositionally biased stretch (low complexity) spans proline 112–serine 128. Positions lysine 119–glutamate 164 form a coiled coil.

As to quaternary structure, interacts with GLE1, NUP42, NAB2, ZDS1 and probably DBP5. Forms a complex with GLE1 and NAB2.

The protein resides in the cytoplasm. It is found in the nucleus. The protein localises to the nuclear pore complex. It localises to the nucleus membrane. Functionally, high-copy suppressor of mutant alleles of ATP-dependent RNA helicase DBP5, which is involved in mRNA export from the nucleus. It may also play an important role in a late stage of NAB2-mRNA export. The chain is mRNA transport factor GFD1 (GFD1) from Saccharomyces cerevisiae (strain ATCC 204508 / S288c) (Baker's yeast).